A 321-amino-acid chain; its full sequence is MSMPMDVSKKSFKPAKTQKSKTISNDYIKGLQTKHFLLYNVIPTIGTITAIALLWWYPISSVEIGLLIGMWALSMIGMSVGLHRYFAHRAFKTSQTMSVILAILGCMGAQGPVVSWVAVHRRHHEYSDLPGDPHSPNPELLGEGIFGTLRGLWHAHVGWLTNHEYPNPMYYAPELMRDKTISKINRNYVVWIVLGLLIPTILGGIIHGSWIGAVEGLLWGGFVRMFVVDNSILSINSFSHAFGTHPFDSKDQSRNNIWVAIPTFGESWQNNHHTFENSAAIGLKWWQIDLGYCLIWGLEKLGLVWDVKLPTAKMIEAKKLA.

Transmembrane regions (helical) follow at residues Phe36–Trp56 and Val62–Leu82. A Histidine box-1 motif is present at residues His83–His88. A helical membrane pass occupies residues Val99–Val119. A Histidine box-2 motif is present at residues His120–His124. Residues Tyr188–Gly208 form a helical membrane-spanning segment. The Histidine box-3 motif lies at Gln269 to His273.

This sequence belongs to the fatty acid desaturase type 2 family. Requires Fe(2+) as cofactor.

It is found in the membrane. It catalyses the reaction 5-hexenoyl-[ACP] + 2 reduced [2Fe-2S]-[ferredoxin] + O2 + 2 H(+) = 5-hexynoyl-[ACP] + 2 oxidized [2Fe-2S]-[ferredoxin] + 2 H2O. The catalysed reaction is hexanoyl-[ACP] + 2 reduced [2Fe-2S]-[ferredoxin] + O2 + 2 H(+) = 5-hexenoyl-[ACP] + 2 oxidized [2Fe-2S]-[ferredoxin] + 2 H2O. Functionally, desaturase involved in the biosynthesis of jamaicamides, which show sodium channel blocking activity and fish toxicity. Catalyzes the conversion of 5-hexenoyl loaded onto the acyl carrier protein JamC (5-hexenoyl-JamC) to 5-hexynoyl-JamC. Can also catalyze the conversion of hexanoyl-JamC to 5-hexenoyl-JamC, but it cannot use free 5-hexenoic acid, 5-hexenoyl-CoA, 2-hexenoyl-JamC, 3-hexenoyl-JamC or 4-hexenoyl-JamC. Is specific for C(6) chains, and cannot use 4-pentenoyl-JamC, 6-heptenoyl-JamC or 7-octenoyl-JamC as substrate. The polypeptide is Hex-5-enoyl-[acyl-carrier protein] acetylenase (Moorena producens (strain JHB)).